Here is an 81-residue protein sequence, read N- to C-terminus: Short neurotoxin 1 (81 aa).

The N-terminal stretch at 1-21 (MKTLLLTLVVVTIVCLDLGYT) is a signal peptide. Disulfide bonds link Cys-24–Cys-43, Cys-38–Cys-60, Cys-62–Cys-73, and Cys-74–Cys-79.

This sequence belongs to the three-finger toxin family. Short-chain subfamily. Type I alpha-neurotoxin sub-subfamily. As to expression, expressed by the venom gland.

Its subcellular location is the secreted. In terms of biological role, binds to muscle nicotinic acetylcholine receptor (nAChR) and inhibit acetylcholine from binding to the receptor, thereby impairing neuromuscular transmission. The polypeptide is Short neurotoxin 1 (Hoplocephalus stephensii (Stephens's banded snake)).